The primary structure comprises 235 residues: C-&gt;U-editing enzyme APOBEC-1 (235 aa).

The CMP/dCMP-type deaminase domain occupies G10–K131. H60 serves as a coordination point for Zn(2+). The active-site Proton donor is E62. Zn(2+) contacts are provided by C92 and C95.

This sequence belongs to the cytidine and deoxycytidylate deaminase family. In terms of assembly, homodimer. Interacts with A1CF; form an mRNA editing complex. Interacts with RBM47; form an mRNA editing complex. Found in a complex with CELF2/CUGBP2 and A1CF. Interacts with HNRPAB. Interacts with SYNCRIP. Requires Zn(2+) as cofactor.

The protein localises to the cytoplasm. Its subcellular location is the nucleus. The catalysed reaction is a cytidine in mRNA + H2O + H(+) = a uridine in mRNA + NH4(+). The enzyme catalyses cytidine(6666) in apoB mRNA + H2O + H(+) = uridine(6666) in apoB mRNA + NH4(+). Functionally, cytidine deaminase catalyzing the cytidine to uridine postranscriptional editing of a variety of mRNAs. Form complexes with cofactors that confer differential editing activity and selectivity. Responsible for the postranscriptional editing of a CAA codon for Gln to a UAA codon for stop in the apolipoprotein B mRNA. Also involved in CGA (Arg) to UGA (Stop) editing in the NF1 mRNA. May also play a role in the epigenetic regulation of gene expression by participating in DNA demethylation. This Monodelphis domestica (Gray short-tailed opossum) protein is C-&gt;U-editing enzyme APOBEC-1.